The primary structure comprises 250 residues: Bacteriorhodopsin-I (250 aa).

The next 7 membrane-spanning stretches (helical) occupy residues 7-27 (EGIW…YFIA), 42-62 (IATI…ALGF), 81-101 (YTDW…LAGA), 114-134 (VLMI…VLSA), 139-159 (LVWW…LFSS), 185-205 (VWLV…LVGI), and 207-227 (IETA…GIIL). Residue Lys-220 is modified to N6-(retinylidene)lysine.

This sequence belongs to the archaeal/bacterial/fungal opsin family. The covalent binding of retinal to the apoprotein, bacterioopsin, generates bacteriorhodopsin.

It is found in the membrane. Its function is as follows. Light-driven proton pump. This chain is Bacteriorhodopsin-I (bop), found in Haloarcula marismortui (strain ATCC 43049 / DSM 3752 / JCM 8966 / VKM B-1809) (Halobacterium marismortui).